The following is a 910-amino-acid chain: Leucine--tRNA ligase (910 aa).

Positions 50 to 60 (PYTNGSLHVGH) match the 'HIGH' region motif. Positions 611-615 (KISKS) match the 'KMSKS' region motif. Position 614 (Lys-614) interacts with ATP.

The protein belongs to the class-I aminoacyl-tRNA synthetase family.

The protein resides in the cytoplasm. The catalysed reaction is tRNA(Leu) + L-leucine + ATP = L-leucyl-tRNA(Leu) + AMP + diphosphate. The sequence is that of Leucine--tRNA ligase from Thermoplasma acidophilum (strain ATCC 25905 / DSM 1728 / JCM 9062 / NBRC 15155 / AMRC-C165).